Reading from the N-terminus, the 579-residue chain is Probable serine/threonine-protein kinase kinY (579 aa).

Positions 1 to 24 (MINGEQTMVEDELPDQGKPMSDES) are disordered. The Protein kinase domain occupies 32–309 (LKVGESIGSG…HVLKQLTSLF (278 aa)). Residues 38 to 46 (IGSGAYGIV) and Lys-59 contribute to the ATP site. Asp-167 (proton acceptor) is an active-site residue.

This sequence belongs to the protein kinase superfamily. TKL Ser/Thr protein kinase family.

It catalyses the reaction L-seryl-[protein] + ATP = O-phospho-L-seryl-[protein] + ADP + H(+). The catalysed reaction is L-threonyl-[protein] + ATP = O-phospho-L-threonyl-[protein] + ADP + H(+). This is Probable serine/threonine-protein kinase kinY (kinY) from Dictyostelium discoideum (Social amoeba).